Here is a 387-residue protein sequence, read N- to C-terminus: MNLHEYQAKDLLESYGLKVQKGIVAHNPNEAAQAFDQLGGKFAVVKAQVHAGGRGKAGGVKVVKSSQEAREVAESLIGKNLVTFQTDAEGQPVNSVGVFEDVYPVTRELYLGAVVDRSSRKVTFMASTEGGVDIEEVAHNSPEKILKVEVDPLVGLQPFQAREVAFKLGLEGKQINDFVKTMLGAYKAFIECDFALFEINPLAVRENGEIVCVDGKINLDSNALYRHPKLLALRDKSQENAKELKASEHELNYVALEGNIGCMVNGAGLAMATMDIIQLYGGKPANFLDVGGGATKERVIEAFKLILDDENVKAVLINIFGGIVRCDMIAEAIIEAVKEVNVTVPVVVRLEGNNAEKGAKILADSGLKLIPADGLADAADKVVKSLG.

Positions 9 to 245 constitute an ATP-grasp domain; it reads KDLLESYGLK…KSQENAKELK (237 aa). ATP contacts are provided by residues Lys46, 53-55, Glu100, Tyr103, and Glu108; that span reads GRG. Positions 200 and 214 each coordinate Mg(2+). Substrate-binding positions include Asn265 and 322 to 324; that span reads GIV.

Belongs to the succinate/malate CoA ligase beta subunit family. As to quaternary structure, heterotetramer of two alpha and two beta subunits. Mg(2+) is required as a cofactor.

The catalysed reaction is succinate + ATP + CoA = succinyl-CoA + ADP + phosphate. It carries out the reaction GTP + succinate + CoA = succinyl-CoA + GDP + phosphate. The protein operates within carbohydrate metabolism; tricarboxylic acid cycle; succinate from succinyl-CoA (ligase route): step 1/1. Its function is as follows. Succinyl-CoA synthetase functions in the citric acid cycle (TCA), coupling the hydrolysis of succinyl-CoA to the synthesis of either ATP or GTP and thus represents the only step of substrate-level phosphorylation in the TCA. The beta subunit provides nucleotide specificity of the enzyme and binds the substrate succinate, while the binding sites for coenzyme A and phosphate are found in the alpha subunit. The chain is Succinate--CoA ligase [ADP-forming] subunit beta from Francisella tularensis subsp. novicida (strain U112).